The sequence spans 315 residues: Ribosomal RNA small subunit methyltransferase H (315 aa).

S-adenosyl-L-methionine is bound by residues 37 to 39, aspartate 57, phenylalanine 83, aspartate 105, and glutamine 112; that span reads GGH.

The protein belongs to the methyltransferase superfamily. RsmH family.

It is found in the cytoplasm. The enzyme catalyses cytidine(1402) in 16S rRNA + S-adenosyl-L-methionine = N(4)-methylcytidine(1402) in 16S rRNA + S-adenosyl-L-homocysteine + H(+). Specifically methylates the N4 position of cytidine in position 1402 (C1402) of 16S rRNA. This chain is Ribosomal RNA small subunit methyltransferase H, found in Pseudomonas fluorescens (strain ATCC BAA-477 / NRRL B-23932 / Pf-5).